Reading from the N-terminus, the 429-residue chain is Enolase (429 aa).

A (2R)-2-phosphoglycerate-binding site is contributed by Q162. The Proton donor role is filled by E204. Residues D241, E283, and D310 each contribute to the Mg(2+) site. Residues K335, R364, S365, and K386 each contribute to the (2R)-2-phosphoglycerate site. K335 (proton acceptor) is an active-site residue.

Belongs to the enolase family. It depends on Mg(2+) as a cofactor.

The protein localises to the cytoplasm. It localises to the secreted. It is found in the cell surface. It carries out the reaction (2R)-2-phosphoglycerate = phosphoenolpyruvate + H2O. It participates in carbohydrate degradation; glycolysis; pyruvate from D-glyceraldehyde 3-phosphate: step 4/5. In terms of biological role, catalyzes the reversible conversion of 2-phosphoglycerate (2-PG) into phosphoenolpyruvate (PEP). It is essential for the degradation of carbohydrates via glycolysis. This chain is Enolase, found in Mycobacterium tuberculosis (strain ATCC 25177 / H37Ra).